The following is a 197-amino-acid chain: Thymidine kinase (197 aa).

ATP is bound by residues 9–16 and 87–90; these read SAMDAGKT and DEIH. Glutamate 88 (proton acceptor) is an active-site residue. Residues cysteine 145, cysteine 147, cysteine 187, and histidine 190 each contribute to the Zn(2+) site.

It belongs to the thymidine kinase family. In terms of assembly, homotetramer.

It is found in the cytoplasm. The catalysed reaction is thymidine + ATP = dTMP + ADP + H(+). The chain is Thymidine kinase from Francisella tularensis subsp. tularensis (strain SCHU S4 / Schu 4).